We begin with the raw amino-acid sequence, 316 residues long: Acetyl-coenzyme A carboxylase carboxyl transferase subunit alpha (316 aa).

Positions 36–290 (KLEQKLDSLK…KQFLVEQLHI (255 aa)) constitute a CoA carboxyltransferase C-terminal domain.

The protein belongs to the AccA family. As to quaternary structure, acetyl-CoA carboxylase is a heterohexamer composed of biotin carboxyl carrier protein (AccB), biotin carboxylase (AccC) and two subunits each of ACCase subunit alpha (AccA) and ACCase subunit beta (AccD).

It localises to the cytoplasm. The catalysed reaction is N(6)-carboxybiotinyl-L-lysyl-[protein] + acetyl-CoA = N(6)-biotinyl-L-lysyl-[protein] + malonyl-CoA. It participates in lipid metabolism; malonyl-CoA biosynthesis; malonyl-CoA from acetyl-CoA: step 1/1. Component of the acetyl coenzyme A carboxylase (ACC) complex. First, biotin carboxylase catalyzes the carboxylation of biotin on its carrier protein (BCCP) and then the CO(2) group is transferred by the carboxyltransferase to acetyl-CoA to form malonyl-CoA. The protein is Acetyl-coenzyme A carboxylase carboxyl transferase subunit alpha of Protochlamydia amoebophila (strain UWE25).